The sequence spans 309 residues: Ribonuclease Z (309 aa).

The Zn(2+) site is built by His63, His65, Asp67, His68, His141, Asp212, and His270. Catalysis depends on Asp67, which acts as the Proton acceptor.

This sequence belongs to the RNase Z family. In terms of assembly, homodimer. Requires Zn(2+) as cofactor.

The catalysed reaction is Endonucleolytic cleavage of RNA, removing extra 3' nucleotides from tRNA precursor, generating 3' termini of tRNAs. A 3'-hydroxy group is left at the tRNA terminus and a 5'-phosphoryl group is left at the trailer molecule.. Zinc phosphodiesterase, which displays some tRNA 3'-processing endonuclease activity. Probably involved in tRNA maturation, by removing a 3'-trailer from precursor tRNA. In Lactobacillus gasseri (strain ATCC 33323 / DSM 20243 / BCRC 14619 / CIP 102991 / JCM 1131 / KCTC 3163 / NCIMB 11718 / NCTC 13722 / AM63), this protein is Ribonuclease Z.